Here is an 850-residue protein sequence, read N- to C-terminus: Protein STB2 (850 aa).

2 positions are modified to phosphoserine: Ser594 and Ser625.

The protein to yeast STB6. Interacts with SIN3.

The sequence is that of Protein STB2 (STB2) from Saccharomyces cerevisiae (strain ATCC 204508 / S288c) (Baker's yeast).